The sequence spans 489 residues: Ammonium transporter MEP3 (489 aa).

Over 1 to 17 (MARGDGHLWTETYDSST) the chain is Extracellular. Residues 18–38 (VAFMILGAALVFFMVPGLGFL) form a helical membrane-spanning segment. Residues 39–48 (YSGLARRKSA) lie on the Cytoplasmic side of the membrane. A helical transmembrane segment spans residues 49–69 (LALIWVVIMATLVGILQWYFW). Over 70 to 108 (GYSLAFSKTATNNKFIGNLDSFGFRNVYGKISDDSTYPE) the chain is Extracellular. The helical transmembrane segment at 109–129 (LIYAIFQMMFMCVALSIIAGA) threads the bilayer. The Cytoplasmic portion of the chain corresponds to 130–139 (TAERGKLFPH). Residues 140–160 (MVFLFVFATLVYCPITYWIWA) traverse the membrane as a helical segment. Topologically, residues 161 to 173 (PGGWAYQWGVLDW) are extracellular. The helical transmembrane segment at 174–194 (AGGGNIEILSAVAGFVYSYFL) threads the bilayer. The Cytoplasmic segment spans residues 195–209 (GRRKENLLINFRPHN). A helical transmembrane segment spans residues 210-230 (VSMVTLGTSILWFGWLLFNAA). The Extracellular portion of the chain corresponds to 231–239 (SSLSPNMRS). A helical membrane pass occupies residues 240 to 260 (VYAFMNTCLSATTGGMTWCLL). Residues 261–267 (DYRSEKK) are Cytoplasmic-facing. A helical membrane pass occupies residues 268–288 (WSTVGLCSGIICGLVAATPSS). Residue Gly289 is a topological domain, extracellular. A helical membrane pass occupies residues 290 to 310 (CITLYGSLIQGIIAGVVCNFA). The Cytoplasmic segment spans residues 311-330 (TKIKYYLKVDDSLDLLAEHG). The helical transmembrane segment at 331–351 (IAGVVGLIFNALFAADWVIGM) threads the bilayer. The Extracellular portion of the chain corresponds to 352 to 372 (DGTTKHKGGWLTHNWKQMYIQ). A helical membrane pass occupies residues 373 to 393 (IAYIGASAGYCAVVTAIICFV). The Cytoplasmic portion of the chain corresponds to 394 to 489 (LGKIPGVHLR…NPKLHHAKEA (96 aa)). Polar residues predominate over residues 448 to 481 (GANSASETNPTEDSQNSSLSSATVSGQNEKSNNP). The interval 448–489 (GANSASETNPTEDSQNSSLSSATVSGQNEKSNNPKLHHAKEA) is disordered.

It belongs to the ammonia transporter channel (TC 1.A.11.2) family.

The protein resides in the membrane. Its function is as follows. Transporter for ammonium (both charged and uncharged NH3 and NH4) to use as a nitrogen source. The affinity of MEP2 is about twenty times higher than that of MEP1. MEP3 has the lowest affinity. The polypeptide is Ammonium transporter MEP3 (MEP3) (Saccharomyces cerevisiae (strain ATCC 204508 / S288c) (Baker's yeast)).